A 283-amino-acid polypeptide reads, in one-letter code: Elongation factor Ts (283 aa).

An involved in Mg(2+) ion dislocation from EF-Tu region spans residues 79–82 (TDFV).

Belongs to the EF-Ts family.

The protein localises to the cytoplasm. In terms of biological role, associates with the EF-Tu.GDP complex and induces the exchange of GDP to GTP. It remains bound to the aminoacyl-tRNA.EF-Tu.GTP complex up to the GTP hydrolysis stage on the ribosome. This Pseudoalteromonas translucida (strain TAC 125) protein is Elongation factor Ts.